The following is a 424-amino-acid chain: UPF0597 protein Ssed_2537 (424 aa).

This sequence belongs to the UPF0597 family.

The protein is UPF0597 protein Ssed_2537 of Shewanella sediminis (strain HAW-EB3).